Reading from the N-terminus, the 121-residue chain is RxLR effector protein PexRD2 (121 aa).

Residues 1-20 (MRLSYVIVVIATSFLVTTEA) form the signal peptide. Positions 38 to 56 (RLLRKHYTAAENDDDSEAR) match the RxLR-dEER motif. The WY domain stretch occupies residues 57–121 (ALNTEKMKTM…LNYVAEHTAV (65 aa)).

The protein belongs to the RxLR effector family. Homodimer. Interacts with host MAPKKK epsilon (via its kinase domain).

It localises to the secreted. The protein localises to the host cytoplasm. Its subcellular location is the host nucleus. In terms of biological role, effector that enhances P.infestans colonization of Nicotiana benthamiana leaves. Induces a weak Cell death response in N.benthamiana. PexRD2-induced cell death is dependent on SGT1, suggesting that PexRD2 is recognized by the plant immune system. Interacts with the kinase domain of the host MAPKKK epsilon, a positive regulator of cell death associated with plant immunity, and perturbs signaling pathways triggered by MAPKKK epsilon. The sequence is that of RxLR effector protein PexRD2 from Phytophthora infestans (strain T30-4) (Potato late blight agent).